The following is a 320-amino-acid chain: MARNKIALIGSGMIGGTLAHLAGLKELGDIVLFDIADGIPQGKGLDIAQSSPVEGFDANLTGASDYSAIEGADVCIVTAGVPRKPGMSRDDLLGINLKVMEQVGAGIKKYAPNAFVICITNPLDAMVWALQKFSGLPANKVVGMAGVLDSSRFRLFLAKEFNVSVQDVTAFVLGGHGDTMVPLARYSTVGGIPLTDLVTMGWVTKERLEEIIQRTRDGGAEIVGLLKTGSAYYAPAASAIEMAESYLKDKKRVLPCAAHLTGQYGVKDMYVGVPTVIGAGGVERVIEIDLNKTEKEAFDKSVAAVAGLCEACINIAPALK.

NAD(+) contacts are provided by residues 10–15 (GSGMIG) and Asp-34. The substrate site is built by Arg-83 and Arg-89. Residues Asn-96 and 119–121 (ITN) contribute to the NAD(+) site. Substrate contacts are provided by Asn-121 and Arg-152. Catalysis depends on His-176, which acts as the Proton acceptor.

Belongs to the LDH/MDH superfamily. MDH type 3 family.

The enzyme catalyses (S)-malate + NAD(+) = oxaloacetate + NADH + H(+). Its function is as follows. Catalyzes the reversible oxidation of malate to oxaloacetate. This is Malate dehydrogenase from Rhizobium etli (strain CIAT 652).